A 367-amino-acid polypeptide reads, in one-letter code: Aflatoxin B1 aldehyde reductase member 2 (367 aa).

The N-terminal 46 residues, 1-46, are a transit peptide targeting the mitochondrion; it reads MLRAVSRAVSRAAVRCAWRSGPSVARPLAMSRSPAPRAVSGAPLRP. A disordered region spans residues 27–46; that stretch reads PLAMSRSPAPRAVSGAPLRP. Residue Ser40 is modified to Phosphoserine. Position 48 is a phosphothreonine (Thr48). Asp80 contributes to the NADP(+) binding site. Tyr85 functions as the Proton donor in the catalytic mechanism. Position 136 is an N6-acetyllysine (Lys136). His149 is a substrate binding site. NADP(+) contacts are provided by residues 179 to 180, Gln205, 234 to 244, and Arg258; these read SN and NPLAGGLLTGK. At Lys244 the chain carries N6-succinyllysine. The residue at position 263 (Ser263) is a Phosphoserine. Substrate is bound by residues Tyr268 and Arg271. Residue 326–334 coordinates NADP(+); that stretch reads SSLEQLEQN. Substrate is bound at residue Arg367.

The protein belongs to the aldo/keto reductase family. Aldo/keto reductase 2 subfamily. In terms of assembly, homodimer. Heterodimer with AKR7A1.

It is found in the mitochondrion. The protein resides in the golgi apparatus. It localises to the golgi stack. Its subcellular location is the cytoplasm. It carries out the reaction 4-hydroxybutanoate + NADP(+) = succinate semialdehyde + NADPH + H(+). Functionally, catalyzes the NADPH-dependent reduction of succinic semialdehyde to gamma-hydroxybutyrate. May have an important role in producing the neuromodulator gamma-hydroxybutyrate (GHB). Has broad substrate specificity. Can reduce the dialdehyde protein-binding form of aflatoxin B1 (AFB1) to the non-binding AFB1 dialcohol. Acts as a 2-carboxybenzaldehyde reductase. The protein is Aflatoxin B1 aldehyde reductase member 2 (Akr7a2) of Rattus norvegicus (Rat).